Consider the following 1894-residue polypeptide: Plexin-A4 (1894 aa).

Positions 1–23 (MKAMPWNWTCLLSHLLMVGMGSS) are cleaved as a signal peptide. The region spanning 24–507 (TLLTRQPAPL…SERQLTRVPV (484 aa)) is the Sema domain. Residues 24 to 1237 (TLLTRQPAPL…IAPDSPLSLP (1214 aa)) are Extracellular-facing. Disulfide bonds link cysteine 95–cysteine 104, cysteine 130–cysteine 138, cysteine 284–cysteine 405, cysteine 300–cysteine 356, cysteine 374–cysteine 393, cysteine 510–cysteine 527, cysteine 516–cysteine 558, cysteine 519–cysteine 536, cysteine 530–cysteine 542, and cysteine 593–cysteine 612. Positions 509-559 (SCGQYQSCGECLGSGDPHCGWCVLHNTCTRKERCERSKEPRRFASEMKQCV) constitute a PSI 1 domain. N-linked (GlcNAc...) asparagine glycosylation is present at asparagine 655. 2 PSI domains span residues 655–702 (NCSV…EDCP) and 803–856 (KCGA…SKCT). IPT/TIG domains lie at 858–952 (PRIT…YYFM), 954–1037 (LTLS…FQYV), 1040–1139 (PTIV…FTYY), and 1142–1230 (PVFE…YIAP). Residues asparagine 1007, asparagine 1132, and asparagine 1180 are each glycosylated (N-linked (GlcNAc...) asparagine). A helical transmembrane segment spans residues 1238-1258 (AIVSIAVAGGLLIIFIVAVLI). The Cytoplasmic segment spans residues 1259-1894 (AYKRKSRESD…QVITLMSLDS (636 aa)). N6-acetyllysine is present on lysine 1350.

Belongs to the plexin family. In terms of assembly, interacts with NRP1 and NRP2.

It is found in the cell membrane. Coreceptor for SEMA3A. Necessary for signaling by class 3 semaphorins and subsequent remodeling of the cytoskeleton. Plays a role in axon guidance in the developing nervous system. Class 3 semaphorins bind to a complex composed of a neuropilin and a plexin. The plexin modulates the affinity of the complex for specific semaphorins, and its cytoplasmic domain is required for the activation of down-stream signaling events in the cytoplasm. This chain is Plexin-A4 (PLXNA4), found in Homo sapiens (Human).